The following is a 368-amino-acid chain: Phosphate acyltransferase (368 aa).

The protein belongs to the PlsX family. In terms of assembly, homodimer. Probably interacts with PlsY.

It is found in the cytoplasm. It carries out the reaction a fatty acyl-[ACP] + phosphate = an acyl phosphate + holo-[ACP]. The protein operates within lipid metabolism; phospholipid metabolism. Its function is as follows. Catalyzes the reversible formation of acyl-phosphate (acyl-PO(4)) from acyl-[acyl-carrier-protein] (acyl-ACP). This enzyme utilizes acyl-ACP as fatty acyl donor, but not acyl-CoA. In Methylibium petroleiphilum (strain ATCC BAA-1232 / LMG 22953 / PM1), this protein is Phosphate acyltransferase.